The chain runs to 229 residues: Potassium/proton antiporter CemA (229 aa).

4 helical membrane-spanning segments follow: residues 7–27, 114–134, 145–165, and 189–209; these read FTSL…SLSF, IICF…LVIL, LSDT…IGFH, and ILSS…KFWV.

The protein belongs to the CemA family.

It is found in the plastid. Its subcellular location is the chloroplast inner membrane. The enzyme catalyses K(+)(in) + H(+)(out) = K(+)(out) + H(+)(in). In terms of biological role, contributes to K(+)/H(+) antiport activity by supporting proton efflux to control proton extrusion and homeostasis in chloroplasts in a light-dependent manner to modulate photosynthesis. Prevents excessive induction of non-photochemical quenching (NPQ) under continuous-light conditions. Indirectly promotes efficient inorganic carbon uptake into chloroplasts. This is Potassium/proton antiporter CemA from Daucus carota (Wild carrot).